Here is a 308-residue protein sequence, read N- to C-terminus: Probable manganese-dependent inorganic pyrophosphatase (308 aa).

His-9, Asp-13, Asp-15, Asp-75, His-97, and Asp-149 together coordinate Mn(2+).

Belongs to the PPase class C family. Requires Mn(2+) as cofactor.

The protein localises to the cytoplasm. It catalyses the reaction diphosphate + H2O = 2 phosphate + H(+). The chain is Probable manganese-dependent inorganic pyrophosphatase from Staphylococcus carnosus (strain TM300).